The primary structure comprises 82 residues: MNKPVHNNEHRRKRFNKKCPFVSAGWKTIDYKDVETLKKFITERGKVLPRRITGVSSRFQGVLSQAIKRARHLGLLPFVGED.

Belongs to the bacterial ribosomal protein bS18 family. As to quaternary structure, part of the 30S ribosomal subunit. Forms a tight heterodimer with protein bS6.

Functionally, binds as a heterodimer with protein bS6 to the central domain of the 16S rRNA, where it helps stabilize the platform of the 30S subunit. The protein is Small ribosomal subunit protein bS18 of Chlamydia pneumoniae (Chlamydophila pneumoniae).